The primary structure comprises 656 residues: 1-deoxy-D-xylulose-5-phosphate synthase 1 (656 aa).

Residues H73 and 113–115 (SHA) each bind thiamine diphosphate. D144 is a Mg(2+) binding site. Thiamine diphosphate-binding positions include 145-146 (GA), N174, Y285, and E367. N174 is a binding site for Mg(2+). The tract at residues 625-656 (AGDRAGGPAVEQPGDGRMSGDGRIVMPAQGEN) is disordered.

It belongs to the transketolase family. DXPS subfamily. In terms of assembly, homodimer. Requires Mg(2+) as cofactor. Thiamine diphosphate serves as cofactor.

It carries out the reaction D-glyceraldehyde 3-phosphate + pyruvate + H(+) = 1-deoxy-D-xylulose 5-phosphate + CO2. Its pathway is metabolic intermediate biosynthesis; 1-deoxy-D-xylulose 5-phosphate biosynthesis; 1-deoxy-D-xylulose 5-phosphate from D-glyceraldehyde 3-phosphate and pyruvate: step 1/1. Catalyzes the acyloin condensation reaction between C atoms 2 and 3 of pyruvate and glyceraldehyde 3-phosphate to yield 1-deoxy-D-xylulose-5-phosphate (DXP). The polypeptide is 1-deoxy-D-xylulose-5-phosphate synthase 1 (Streptomyces coelicolor (strain ATCC BAA-471 / A3(2) / M145)).